Here is a 290-residue protein sequence, read N- to C-terminus: Fat storage-inducing transmembrane protein 1 (290 aa).

A run of 5 helical transmembrane segments spans residues 1-21 (MFLN…LGNT), 26-46 (HFHL…LWVS), 65-85 (SGWG…SFSV), 173-193 (LLLC…GPYL), and 205-225 (ILFL…LCLL).

The protein belongs to the FIT family. FIT1 subfamily.

The protein localises to the endoplasmic reticulum membrane. May play an important role in the formation of lipid droplets (LDs) which are storage organelles at the center of lipid and energy homeostasis. May directly bind to diacylglycerol (DAGs) and triacylglycerol. In Danio rerio (Zebrafish), this protein is Fat storage-inducing transmembrane protein 1 (fitm1l).